Consider the following 219-residue polypeptide: Large ribosomal subunit protein bL25 (219 aa).

Positions 188–219 (TVAAPADTAVQPESSSTKGKKDEDGALAKDKK) are disordered. Residues 206-219 (GKKDEDGALAKDKK) show a composition bias toward basic and acidic residues.

Belongs to the bacterial ribosomal protein bL25 family. CTC subfamily. Part of the 50S ribosomal subunit; part of the 5S rRNA/L5/L18/L25 subcomplex. Contacts the 5S rRNA. Binds to the 5S rRNA independently of L5 and L18.

Functionally, this is one of the proteins that binds to the 5S RNA in the ribosome where it forms part of the central protuberance. This Elusimicrobium minutum (strain Pei191) protein is Large ribosomal subunit protein bL25.